Consider the following 257-residue polypeptide: Flap endonuclease Xni (257 aa).

Position 109 (aspartate 109) interacts with Mg(2+). The 5'-3' exonuclease domain maps to 165 to 254 (VKPEQLADYW…GFNLQDIRYE (90 aa)). Residues leucine 176, proline 185, isoleucine 187, and isoleucine 190 each coordinate K(+). An interaction with DNA region spans residues 189–194 (GIGPKA).

Belongs to the Xni family. It depends on Mg(2+) as a cofactor. The cofactor is K(+).

In terms of biological role, has flap endonuclease activity. During DNA replication, flap endonucleases cleave the 5'-overhanging flap structure that is generated by displacement synthesis when DNA polymerase encounters the 5'-end of a downstream Okazaki fragment. This chain is Flap endonuclease Xni, found in Vibrio atlanticus (strain LGP32) (Vibrio splendidus (strain Mel32)).